A 196-amino-acid polypeptide reads, in one-letter code: MSRTAEVRRDTKETQIRVWVDLDGTGASEVSTGVGFFDHMLDSFARHGGFDLKVETKGDLHIDMHHTVEDTGIVLGQAIKESLDGFKGIRRFGHAYIPMDETLSRCAIDLSNRPYLIWKTDFRTPKVGDMDTELFKEFHHAFAMNAGACVHLECLYGTNSHHIAESGFKALARALRQAVELDPKTHGHAPSTKGVL.

Belongs to the imidazoleglycerol-phosphate dehydratase family.

It is found in the cytoplasm. The enzyme catalyses D-erythro-1-(imidazol-4-yl)glycerol 3-phosphate = 3-(imidazol-4-yl)-2-oxopropyl phosphate + H2O. It functions in the pathway amino-acid biosynthesis; L-histidine biosynthesis; L-histidine from 5-phospho-alpha-D-ribose 1-diphosphate: step 6/9. This is Imidazoleglycerol-phosphate dehydratase from Phenylobacterium zucineum (strain HLK1).